Here is a 294-residue protein sequence, read N- to C-terminus: Cytosolic Fe-S cluster assembly factor CFD1 (294 aa).

An ATP-binding site is contributed by 25-32; it reads GKGGVGKS. [4Fe-4S] cluster contacts are provided by C214 and C217.

This sequence belongs to the Mrp/NBP35 ATP-binding proteins family. NUBP2/CFD1 subfamily. In terms of assembly, heterotetramer of 2 NBP35 and 2 CFD1 chains. [4Fe-4S] cluster serves as cofactor.

The protein resides in the cytoplasm. Its function is as follows. Component of the cytosolic iron-sulfur (Fe/S) protein assembly (CIA) machinery. Required for maturation of extramitochondrial Fe-S proteins. The NBP35-CFD1 heterotetramer forms a Fe-S scaffold complex, mediating the de novo assembly of an Fe-S cluster and its transfer to target apoproteins. Required for biogenesis and export of both ribosomal subunits, which may reflect a role in assembly of the Fe/S clusters in RLI1, a protein which performs rRNA processing and ribosome export. The chain is Cytosolic Fe-S cluster assembly factor CFD1 from Candida albicans (strain SC5314 / ATCC MYA-2876) (Yeast).